A 191-amino-acid polypeptide reads, in one-letter code: Potassium-transporting ATPase KdpC subunit (191 aa).

The helical transmembrane segment at Pro-6–Thr-26 threads the bilayer.

Belongs to the KdpC family. In terms of assembly, the system is composed of three essential subunits: KdpA, KdpB and KdpC.

The protein localises to the cell inner membrane. Part of the high-affinity ATP-driven potassium transport (or Kdp) system, which catalyzes the hydrolysis of ATP coupled with the electrogenic transport of potassium into the cytoplasm. This subunit acts as a catalytic chaperone that increases the ATP-binding affinity of the ATP-hydrolyzing subunit KdpB by the formation of a transient KdpB/KdpC/ATP ternary complex. The chain is Potassium-transporting ATPase KdpC subunit from Enterobacter sp. (strain 638).